Reading from the N-terminus, the 354-residue chain is Fusarinine C esterase sidJ (354 aa).

Belongs to the sidJ hydrolase family. In terms of assembly, homodimer.

It carries out the reaction fusarinine C + 3 H2O = 3 fusarinine + Fe(3+). Its function is as follows. Displays specific fusarinine C (FsC) esterase activity but does not hydrolyze triacetylfusarinine C (TAFC), which has the same core structure as fusarinine C. Both extra- and intracellular siderophores have been shown to be crucial for the virulence. Subsequent to chelation of iron and uptake, FsC and TAFC are hydrolyzed and the iron is transferred to the metabolism or to the intracellular siderophore ferricrocin (FC) for transport and storage of iron. The sequence is that of Fusarinine C esterase sidJ from Aspergillus fumigatus (strain ATCC MYA-4609 / CBS 101355 / FGSC A1100 / Af293) (Neosartorya fumigata).